Here is a 491-residue protein sequence, read N- to C-terminus: Cadherin-3 (491 aa).

Cadherin domains follow at residues 1-102, 103-208, and 209-314; these read ENTV…PPVF, VPPS…DHGP, and VPEP…DPWT. Residues 1 to 316 lie on the Extracellular side of the membrane; the sequence is ENTVSHEVQR…VTCRDPWTWG (316 aa). N-linked (GlcNAc...) asparagine glycosylation occurs at Asn-228. Residues 317–339 form a helical membrane-spanning segment; it reads FLLPILGAALALLLLLLVLLFLV. Topologically, residues 340–491 are cytoplasmic; sequence RKKRKIKEPL…ADMYGGGQDD (152 aa).

As to quaternary structure, interacts with CDCP1 and CTNNB1.

It localises to the cell membrane. Cadherins are calcium-dependent cell adhesion proteins. They preferentially interact with themselves in a homophilic manner in connecting cells; cadherins may thus contribute to the sorting of heterogeneous cell types. This Bos taurus (Bovine) protein is Cadherin-3 (CDH3).